The sequence spans 288 residues: Tryptophan 2,3-dioxygenase (288 aa).

Substrate contacts are provided by residues 57–61 (FIIQH), Tyr-119, and Arg-123. His-246 contacts heme. Residue Thr-260 participates in substrate binding.

The protein belongs to the tryptophan 2,3-dioxygenase family. In terms of assembly, homotetramer. Heme is required as a cofactor.

The enzyme catalyses L-tryptophan + O2 = N-formyl-L-kynurenine. It functions in the pathway amino-acid degradation; L-tryptophan degradation via kynurenine pathway; L-kynurenine from L-tryptophan: step 1/2. Its function is as follows. Heme-dependent dioxygenase that catalyzes the oxidative cleavage of the L-tryptophan (L-Trp) pyrrole ring and converts L-tryptophan to N-formyl-L-kynurenine. Catalyzes the oxidative cleavage of the indole moiety. This Pseudomonas aeruginosa (strain UCBPP-PA14) protein is Tryptophan 2,3-dioxygenase.